Reading from the N-terminus, the 406-residue chain is Phosphopentomutase (406 aa).

Positions 10, 305, 310, 346, 347, and 358 each coordinate Mn(2+).

This sequence belongs to the phosphopentomutase family. The cofactor is Mn(2+).

It is found in the cytoplasm. It carries out the reaction 2-deoxy-alpha-D-ribose 1-phosphate = 2-deoxy-D-ribose 5-phosphate. It catalyses the reaction alpha-D-ribose 1-phosphate = D-ribose 5-phosphate. Its pathway is carbohydrate degradation; 2-deoxy-D-ribose 1-phosphate degradation; D-glyceraldehyde 3-phosphate and acetaldehyde from 2-deoxy-alpha-D-ribose 1-phosphate: step 1/2. Its function is as follows. Isomerase that catalyzes the conversion of deoxy-ribose 1-phosphate (dRib-1-P) and ribose 1-phosphate (Rib-1-P) to deoxy-ribose 5-phosphate (dRib-5-P) and ribose 5-phosphate (Rib-5-P), respectively. In Rhizobium johnstonii (strain DSM 114642 / LMG 32736 / 3841) (Rhizobium leguminosarum bv. viciae), this protein is Phosphopentomutase.